The following is a 272-amino-acid chain: Phosphate import ATP-binding protein PstB (272 aa).

Positions 26-267 (LEIRNLDLRY…PKKRKTEDYI (242 aa)) constitute an ABC transporter domain. 58-65 (GPSGCGKS) is a binding site for ATP.

It belongs to the ABC transporter superfamily. Phosphate importer (TC 3.A.1.7) family. The complex is composed of two ATP-binding proteins (PstB), two transmembrane proteins (PstC and PstA) and a solute-binding protein (PstS).

It is found in the cell inner membrane. The enzyme catalyses phosphate(out) + ATP + H2O = ADP + 2 phosphate(in) + H(+). Its function is as follows. Part of the ABC transporter complex PstSACB involved in phosphate import. Responsible for energy coupling to the transport system. The chain is Phosphate import ATP-binding protein PstB from Shewanella frigidimarina (strain NCIMB 400).